The sequence spans 406 residues: Bifunctional enzyme Fae/Hps (406 aa).

The formaldehyde-activating enzyme stretch occupies residues 1-164 (MSDIYEIGEA…AEKDRGTHPI (164 aa)). Residue His20 is the Proton donor of the active site. Substrate is bound by residues Asp22, Leu51, Lys69, Thr71, and Gln86. The interval 165–406 (MGFKAMKLWN…RLALDEDEKI (242 aa)) is 3-hexulose-6-phosphate synthase.

The protein in the N-terminal section; belongs to the formaldehyde-activating enzyme family. It in the C-terminal section; belongs to the HPS/KGPDC family. HPS subfamily.

The catalysed reaction is 5,6,7,8-tetrahydromethanopterin + formaldehyde = 5,10-methylenetetrahydromethanopterin + H2O. It catalyses the reaction D-ribulose 5-phosphate + formaldehyde = D-arabino-hex-3-ulose 6-phosphate. Its pathway is carbohydrate biosynthesis; D-ribose 5-phosphate biosynthesis. Functionally, catalyzes the condensation of formaldehyde with tetrahydromethanopterin (H(4)MPT) to 5,10-methylenetetrahydromethanopterin. In terms of biological role, catalyzes the reversible formation of ribulose-5-phosphate and formaldehyde from 3-hexulose-6-phosphate. The polypeptide is Bifunctional enzyme Fae/Hps (Methanosphaera stadtmanae (strain ATCC 43021 / DSM 3091 / JCM 11832 / MCB-3)).